The chain runs to 187 residues: Elongation factor P (187 aa).

It belongs to the elongation factor P family.

It localises to the cytoplasm. It functions in the pathway protein biosynthesis; polypeptide chain elongation. Functionally, involved in peptide bond synthesis. Stimulates efficient translation and peptide-bond synthesis on native or reconstituted 70S ribosomes in vitro. Probably functions indirectly by altering the affinity of the ribosome for aminoacyl-tRNA, thus increasing their reactivity as acceptors for peptidyl transferase. The chain is Elongation factor P from Nocardioides sp. (strain ATCC BAA-499 / JS614).